Here is a 148-residue protein sequence, read N- to C-terminus: Phospholipase A2-alpha (148 aa).

The signal sequence occupies residues 1–20; that stretch reads MAAPIILFSFLLFFSVSVSA. Cystine bridges form between C38–C66, C42–C72, C47–C122, C59–C79, C78–C105, and C85–C98. 3 residues coordinate Ca(2+): Y58, G60, and Y63. Residue H82 is part of the active site. D83 provides a ligand contact to Ca(2+).

The protein belongs to the phospholipase A2 family. As to quaternary structure, interacts with MYB30. Requires Ca(2+) as cofactor. As to expression, ubiquitous but expressed at a low level.

The protein localises to the secreted. The protein resides in the golgi apparatus. It is found in the cytoplasmic vesicle. It localises to the nucleus. It carries out the reaction a 1,2-diacyl-sn-glycero-3-phosphocholine + H2O = a 1-acyl-sn-glycero-3-phosphocholine + a fatty acid + H(+). Its function is as follows. PA2 catalyzes the calcium-dependent hydrolysis of the 2-acyl groups in 3-sn-phosphoglycerides. Releases lysophospholipids (LPLs) and free fatty acids (FFAs) from membrane phospholipids in response to hormones and other external stimuli. Modulates the trafficking of PIN proteins to the plasma membrane. Negatively regulates MYB30 transcriptional activity and hypersensitive response control. The protein is Phospholipase A2-alpha of Arabidopsis thaliana (Mouse-ear cress).